The primary structure comprises 464 residues: ATP-dependent protease ATPase subunit HslU (464 aa).

Residues V19, 61-66, D278, E342, and R414 each bind ATP; that span reads GVGKTE.

It belongs to the ClpX chaperone family. HslU subfamily. A double ring-shaped homohexamer of HslV is capped on each side by a ring-shaped HslU homohexamer. The assembly of the HslU/HslV complex is dependent on binding of ATP.

The protein resides in the cytoplasm. ATPase subunit of a proteasome-like degradation complex; this subunit has chaperone activity. The binding of ATP and its subsequent hydrolysis by HslU are essential for unfolding of protein substrates subsequently hydrolyzed by HslV. HslU recognizes the N-terminal part of its protein substrates and unfolds these before they are guided to HslV for hydrolysis. In Halalkalibacterium halodurans (strain ATCC BAA-125 / DSM 18197 / FERM 7344 / JCM 9153 / C-125) (Bacillus halodurans), this protein is ATP-dependent protease ATPase subunit HslU.